The primary structure comprises 279 residues: MEINQAAEKEQEYVHKVYNEIAPHFSQTRYKPWPIVTQFLKTRPMGSIGIDVGCGNGKYLGVNPDIYIIGSDRSDGLIECARGINPSYNLLVADGLNLPHKNETFDFAISIAVVHHWSTRERRVEVIRHVLSKLRQGGQALIYCWALEQGSSRRGYHEGMEQDVFVPWVLPKSKSKPKTKSTPPAKVKTRPKPNLMNIPPKERSEYLQRWKEEQQRSKSLDDNDEKQQQDQEQEREEVKYRYYHLYREGELAEDCRQAGAAVHSEGFERDNWWVVAQKR.

The interval 172–236 is disordered; the sequence is KSKSKPKTKS…QQQDQEQERE (65 aa). Over residues 200-229 the composition is skewed to basic and acidic residues; the sequence is PKERSEYLQRWKEEQQRSKSLDDNDEKQQQ.

Interacts with TRM112.

It is found in the cytoplasm. The protein localises to the nucleus. The catalysed reaction is 5-(carboxymethyl)uridine(34) in tRNA + S-adenosyl-L-methionine = 5-(2-methoxy-2-oxoethyl)uridine(34) in tRNA + S-adenosyl-L-homocysteine. Required for the methylation of the wobble bases at position 34 in tRNA. Appears to have a role in stress-response. This Saccharomyces cerevisiae (strain ATCC 204508 / S288c) (Baker's yeast) protein is tRNA (carboxymethyluridine(34)-5-O)-methyltransferase (TRM9).